Here is a 424-residue protein sequence, read N- to C-terminus: Histidine--tRNA ligase (424 aa).

It belongs to the class-II aminoacyl-tRNA synthetase family. As to quaternary structure, homodimer.

The protein resides in the cytoplasm. It catalyses the reaction tRNA(His) + L-histidine + ATP = L-histidyl-tRNA(His) + AMP + diphosphate + H(+). The polypeptide is Histidine--tRNA ligase (Shewanella amazonensis (strain ATCC BAA-1098 / SB2B)).